We begin with the raw amino-acid sequence, 3790 residues long: Transcription-associated protein 1 (3790 aa).

HEAT repeat units follow at residues 98-136 (RQHVKTIITMMLKILKTDNEENVLVCLRIIIELHKHFRP), 335-381 (TDLR…HVRQ), 740-778 (DLLYQEFLPLLPNLLEGLNRLQSGFHKQHMRDLFVELCL), 1185-1223 (AKATYEVIHELVRHITSPNTIVREESMVLLKHIGTIQSK), 1332-1370 (IGYKEKIINIIFKVMESDKSELQTTAFHCMKHFITGVTL), and 1826-1864 (AIHKKIVLQVFHSLLKGHALEARSIVKQALDVLTPAMPL). Residues 2610–3173 (LLAYLGKSHN…YFPIRTLYLT (564 aa)) form the FAT domain. In terms of domain architecture, PI3K/PI4K catalytic spans 3429–3753 (MPRVEIVQKN…AVDIIMTRFN (325 aa)). The G-loop stretch occupies residues 3435–3441 (VQKNNTA). The interval 3616–3624 (NLTRLNADM) is catalytic loop. The interval 3636-3661 (ISYFKFDVNDDKCQLNQHRPVPFRLT) is activation loop. An FATC domain is found at 3758–3790 (FDSIENKKISVLVQSATNIDNLCRMDPAWHPWL).

It belongs to the PI3/PI4-kinase family. TRA1 subfamily. Component of the Tip60 chromatin-remodeling complex which contains the catalytic subunit Tip60 and the subunits Domino, Tra1, Brd8, E(Pc), DMAP1, Pontin, Reptin, Ing3, Act87E, BAP55, Mrg15, MrgBP, Gas41 and YL-1. Probable component of some SAGA complex. Interacts with Spt3, Gcn5, Ada3 and Ada2b. In terms of tissue distribution, ubiquitous.

The protein resides in the nucleus. It is found in the cytoplasm. Its subcellular location is the chromosome. In terms of biological role, part of the Tip60 chromatin-remodeling complex which is involved in DNA repair. Upon induction of DNA double-strand breaks, this complex acetylates phosphorylated H2AV in nucleosomes and exchanges it with unmodified H2AV. During wing development, required for activity of Notch and its coactivator mam. Function in promoting mam function is likely to involve both the Tip60 and SAGA complexes. In Drosophila melanogaster (Fruit fly), this protein is Transcription-associated protein 1 (Nipped-A).